The sequence spans 529 residues: Bifunctional purine biosynthesis protein PurH (529 aa).

The region spanning 1-148 is the MGS-like domain; sequence MQQRRPVRRA…KNHKDVAIVV (148 aa). At lysine 287 the chain carries N6-acetyllysine.

Belongs to the PurH family.

The catalysed reaction is (6R)-10-formyltetrahydrofolate + 5-amino-1-(5-phospho-beta-D-ribosyl)imidazole-4-carboxamide = 5-formamido-1-(5-phospho-D-ribosyl)imidazole-4-carboxamide + (6S)-5,6,7,8-tetrahydrofolate. It carries out the reaction IMP + H2O = 5-formamido-1-(5-phospho-D-ribosyl)imidazole-4-carboxamide. Its pathway is purine metabolism; IMP biosynthesis via de novo pathway; 5-formamido-1-(5-phospho-D-ribosyl)imidazole-4-carboxamide from 5-amino-1-(5-phospho-D-ribosyl)imidazole-4-carboxamide (10-formyl THF route): step 1/1. It functions in the pathway purine metabolism; IMP biosynthesis via de novo pathway; IMP from 5-formamido-1-(5-phospho-D-ribosyl)imidazole-4-carboxamide: step 1/1. This chain is Bifunctional purine biosynthesis protein PurH, found in Escherichia coli O127:H6 (strain E2348/69 / EPEC).